The primary structure comprises 265 residues: F-box only protein 6 (265 aa).

One can recognise an F-box domain in the interval 3 to 50; that stretch reads LVSINQLPENILLEVFMHVPARQLLRNCRPVCCLWRDLIDLVSLWKRK. The region spanning 71 to 252 is the FBA domain; sequence FYFLCSLRRN…VTNSSVVISH (182 aa). The residue at position 251 (serine 251) is a Phosphoserine.

Part of a SCF (SKP1-cullin-F-box) protein ligase complex. Interacts with VCP, CHEK1 and CUL1.

It localises to the cytoplasm. Its pathway is protein modification; protein ubiquitination. Substrate-recognition component of some SCF (SKP1-CUL1-F-box protein)-type E3 ubiquitin ligase complexes. Involved in endoplasmic reticulum-associated degradation pathway (ERAD) for misfolded lumenal proteins by recognizing and binding sugar chains on unfolded glycoproteins that are retrotranslocated into the cytosol and promoting their ubiquitination and subsequent degradation. Able to recognize and bind denatured glycoproteins, which are modified with not only high-mannose but also complex-type oligosaccharides. Also recognizes sulfated glycans. Also involved in DNA damage response by specifically recognizing activated CHEK1 (phosphorylated on 'Ser-345'), promoting its ubiquitination and degradation. Ubiquitination of CHEK1 is required to ensure that activated CHEK1 does not accumulate as cells progress through S phase, or when replication forks encounter transient impediments during normal DNA replication. The polypeptide is F-box only protein 6 (FBXO6) (Bos taurus (Bovine)).